The chain runs to 525 residues: Probable protein kinase UbiB (525 aa).

The Protein kinase domain maps to 118-500 (DFERVPVASA…QKRTNRLLQG (383 aa)). ATP contacts are provided by residues 124 to 132 (VASASIAQV) and K150. D285 (proton acceptor) is an active-site residue. The helical transmembrane segment at 501 to 521 (LLLFGVAVGVGAVLARAFLAL) threads the bilayer.

It belongs to the ABC1 family. UbiB subfamily.

Its subcellular location is the cell inner membrane. It functions in the pathway cofactor biosynthesis; ubiquinone biosynthesis [regulation]. In terms of biological role, is probably a protein kinase regulator of UbiI activity which is involved in aerobic coenzyme Q (ubiquinone) biosynthesis. The protein is Probable protein kinase UbiB of Paraburkholderia phytofirmans (strain DSM 17436 / LMG 22146 / PsJN) (Burkholderia phytofirmans).